The chain runs to 449 residues: MFS acetylaranotin efflux transporter ataA (449 aa).

A run of 7 helical transmembrane segments spans residues Ser-6–Pro-26, Tyr-45–Ile-65, Trp-67–Pro-87, Phe-115–Val-135, Leu-155–Gly-175, Asn-182–Ile-202, and Leu-227–Phe-247. A glycan (N-linked (GlcNAc...) asparagine) is linked at Asn-252. Helical transmembrane passes span Ile-260 to Val-280, Val-287 to Phe-307, Val-321 to Val-341, Val-349 to Ala-369, and Ala-420 to Val-440.

This sequence belongs to the major facilitator superfamily.

It localises to the cell membrane. Its function is as follows. Efflux pump that may provide the dual role of acetylaranotin export and self-protection by allowing the fungus to evade the harmful effect of its own acetylaranotin production. This chain is MFS acetylaranotin efflux transporter ataA, found in Aspergillus terreus (strain NIH 2624 / FGSC A1156).